The sequence spans 147 residues: 3-dehydroquinate dehydratase (147 aa).

Y23 functions as the Proton acceptor in the catalytic mechanism. Residues N75, H81, and D88 each contribute to the substrate site. Residue H101 is the Proton donor of the active site. Substrate is bound by residues L102–S103 and R112.

Belongs to the type-II 3-dehydroquinase family. In terms of assembly, homododecamer.

The enzyme catalyses 3-dehydroquinate = 3-dehydroshikimate + H2O. The protein operates within metabolic intermediate biosynthesis; chorismate biosynthesis; chorismate from D-erythrose 4-phosphate and phosphoenolpyruvate: step 3/7. Functionally, catalyzes a trans-dehydration via an enolate intermediate. This is 3-dehydroquinate dehydratase from Thioalkalivibrio sulfidiphilus (strain HL-EbGR7).